Reading from the N-terminus, the 235-residue chain is Phosphoribosylaminoimidazole-succinocarboxamide synthase (235 aa).

Belongs to the SAICAR synthetase family.

The catalysed reaction is 5-amino-1-(5-phospho-D-ribosyl)imidazole-4-carboxylate + L-aspartate + ATP = (2S)-2-[5-amino-1-(5-phospho-beta-D-ribosyl)imidazole-4-carboxamido]succinate + ADP + phosphate + 2 H(+). It participates in purine metabolism; IMP biosynthesis via de novo pathway; 5-amino-1-(5-phospho-D-ribosyl)imidazole-4-carboxamide from 5-amino-1-(5-phospho-D-ribosyl)imidazole-4-carboxylate: step 1/2. This chain is Phosphoribosylaminoimidazole-succinocarboxamide synthase, found in Clostridium perfringens (strain SM101 / Type A).